The following is a 974-amino-acid chain: Short transient receptor potential channel 4 (974 aa).

Residues 1 to 324 lie on the Cytoplasmic side of the membrane; that stretch reads MAQFYYKRNV…YDEFPGWRRR (324 aa). ANK repeat units follow at residues 29–60, 71–93, 96–118, and 141–165; these read LSPS…IYFK, RTAL…LSFN, VGDA…LLNH, and PDIT…VQKG. The interval 87-172 is multimerization domain; sequence ELLLSFNVYV…QKGVSVPRPH (86 aa). Zn(2+)-binding residues include H172, C176, C178, and C181. Positions 223–260 form a coiled coil; the sequence is LSWELQELSKVENEFKSEYEELSRQCKQFAKDLLDQTR. Residues 254–304 form a multimerization domain region; that stretch reads DLLDQTRSSRELEIILNYRDDNSLIEEQSGNDLARLKLAIKYRQKEFVAQP. The discontinuously helical intramembrane region spans 325–359; the sequence is HWAVKMVTCFIIGLLFPVFSVCYLIAPKSPLGLFI. Residues 360-362 lie on the Cytoplasmic side of the membrane; the sequence is RKP. A helical membrane pass occupies residues 363 to 383; that stretch reads FIKFICHTASYLTFLFLLLLA. At 384-403 the chain is on the extracellular side; it reads SQHIDRSDLNRQGPPPTIVE. The chain crosses the membrane as a helical span at residues 404–418; it reads WMILPWVLGFIWGEI. Positions 417, 420, 435, and 438 each coordinate Ca(2+). At 419-432 the chain is on the cytoplasmic side; the sequence is KQMWDGGLQDYIHD. A helical transmembrane segment spans residues 433 to 453; that stretch reads WWNLMDFVMNSLYLATISLKI. Topologically, residues 454–475 are extracellular; the sequence is VAFVKYSALNPRESWDMWHPTL. The helical transmembrane segment at 476-498 threads the bilayer; that stretch reads VAEALFAIANIFSSLRLISLFTA. At 499 to 511 the chain is on the cytoplasmic side; sequence NSHLGPLQISLGR. The helical transmembrane segment at 512-534 threads the bilayer; that stretch reads MLLDILKFLFIYCLVLLAFANGL. At 535–599 the chain is on the extracellular side; it reads NQLYFYYEET…HEFTEFVGAT (65 aa). C549 and C554 are disulfide-bonded. Residues 600–620 traverse the membrane as a helical segment; sequence MFGTYNVISLVVLLNMLIAMM. Residues 615 to 974 form an interaction with ITPR1, ITPR2 and ITPR3 region; sequence MLIAMMNNSY…AHEDYVTTRL (360 aa). Over 621–974 the chain is Cytoplasmic; it reads NNSYQLIADH…AHEDYVTTRL (354 aa). The segment at 765-787 is disordered; sequence ANAASSADSDEKSQSEGNGKDKR. Basic and acidic residues predominate over residues 773-784; it reads SDEKSQSEGNGK. Residues Y956 and Y969 each carry the phosphotyrosine; by FYN modification. The tract at residues 972–974 is PDZ-binding domain; it reads TRL.

This sequence belongs to the transient receptor (TC 1.A.4) family. STrpC subfamily. TRPC4 sub-subfamily. Homotetramer. Heterotetramer with TRPC1 and/or TRPC5. Forms a heteromeric ion channel with TRPC1, with a 1:3 TRPC1:TRPC4 stoichiometry. Interacts with TRPC4AP. Isoform alpha but not isoform beta interacts with ITPR1, ITPR2 and ITPR3. Interacts with NHERF1. Interacts with MX1 and RNF24. Interacts (via CIRB domain) with SESTD1 (via the spectrin 1 repeat) and SPTBN5 (via C-terminus). Interacts with CDH5 and CTNNB1. Interacts (via protein 4.1-binding domain) with EPB41L2. Interacts with PLSCR1. Abundantly expressed in brain (hippocampal CA1 pyramidal neurons, dentate gyrus granule cells, and cerebral cortical neurons, and in the septal nuclei and the mitral layer of olfactory bulb). Lower levels are detected in other tissues.

The protein localises to the cell membrane. It carries out the reaction Ca(2+)(in) = Ca(2+)(out). The catalysed reaction is Na(+)(in) = Na(+)(out). It catalyses the reaction Li(+)(in) = Li(+)(out). The enzyme catalyses Cs(+)(in) = Cs(+)(out). Its activity is regulated as follows. May be operated by a phosphatidylinositol second messenger system activated by receptor tyrosine kinases or G-protein coupled receptors. May be activated by intracellular calcium store depletion. Its function is as follows. Forms a receptor-activated non-selective calcium permeant cation channel. Acts as a cell-cell contact-dependent endothelial calcium entry channel. Forms a homomeric ion channel or a heteromeric ion channel with TRPC1; the heteromeric ion channel has reduced calcium permeability compared to the homomeric channel. Also permeable to monovalent ions including sodium, lithium and cesium ions. In Mus musculus (Mouse), this protein is Short transient receptor potential channel 4 (Trpc4).